Here is a 300-residue protein sequence, read N- to C-terminus: Homoserine kinase (300 aa).

86-96 (PVARGLGSSAT) serves as a coordination point for ATP.

The protein belongs to the GHMP kinase family. Homoserine kinase subfamily.

The protein localises to the cytoplasm. The catalysed reaction is L-homoserine + ATP = O-phospho-L-homoserine + ADP + H(+). It participates in amino-acid biosynthesis; L-threonine biosynthesis; L-threonine from L-aspartate: step 4/5. Catalyzes the ATP-dependent phosphorylation of L-homoserine to L-homoserine phosphate. This Persephonella marina (strain DSM 14350 / EX-H1) protein is Homoserine kinase.